We begin with the raw amino-acid sequence, 555 residues long: Glucose-6-phosphate isomerase (555 aa).

E355 functions as the Proton donor in the catalytic mechanism. Active-site residues include H386 and K514.

The protein belongs to the GPI family.

Its subcellular location is the cytoplasm. It catalyses the reaction alpha-D-glucose 6-phosphate = beta-D-fructose 6-phosphate. It participates in carbohydrate biosynthesis; gluconeogenesis. It functions in the pathway carbohydrate degradation; glycolysis; D-glyceraldehyde 3-phosphate and glycerone phosphate from D-glucose: step 2/4. Catalyzes the reversible isomerization of glucose-6-phosphate to fructose-6-phosphate. This is Glucose-6-phosphate isomerase from Buchnera aphidicola subsp. Schizaphis graminum (strain Sg).